A 273-amino-acid polypeptide reads, in one-letter code: Type II pantothenate kinase (273 aa).

8–15 lines the ATP pocket; it reads DAGGTLTK. Glu-76 acts as the Proton acceptor in catalysis. ATP is bound by residues Thr-105, 127–131, Phe-143, and Ser-230; that span reads GGTIM.

It belongs to the type II pantothenate kinase family. As to quaternary structure, homodimer.

It is found in the cytoplasm. The enzyme catalyses (R)-pantothenate + ATP = (R)-4'-phosphopantothenate + ADP + H(+). It participates in cofactor biosynthesis; coenzyme A biosynthesis; CoA from (R)-pantothenate: step 1/5. Its function is as follows. Catalyzes the phosphorylation of pantothenate (Pan), the first step in CoA biosynthesis. The chain is Type II pantothenate kinase from Bacillus cereus (strain ATCC 14579 / DSM 31 / CCUG 7414 / JCM 2152 / NBRC 15305 / NCIMB 9373 / NCTC 2599 / NRRL B-3711).